The primary structure comprises 302 residues: Protein KTI12 homolog (302 aa).

ATP is bound at residue 8–15; the sequence is GQPCSGKS. A calmodulin-binding region spans residues 260 to 273; the sequence is LRRTFVKLMGQSSL.

Belongs to the KTI12 family. In terms of assembly, interacts with the elongator complex. Binds to calmodulin in a calcium-dependent manner. As to expression, expressed in roots, hypocotyls, cotyledons, shoot apices, stems, inflorescence apices, leaves and flowers.

The protein localises to the cytoplasm. Its subcellular location is the nucleus. Its function is as follows. Elongator complex-associated factor that is not a structural subunit but rather transiently contacts the complex. Regulates both meristem activity and organ growth; acts as a positive regulator of adaxial leaf patterning by modulating both cell division and differentiation. Required for an early step in synthesis of 5-carbamoylmethyl (ncm5) groups present on uridines (ncm5U) at the wobble position in tRNA. In Arabidopsis thaliana (Mouse-ear cress), this protein is Protein KTI12 homolog.